The primary structure comprises 328 residues: Tetraacyldisaccharide 4'-kinase (328 aa).

Residue 55–62 (TAGGNGKT) participates in ATP binding.

The protein belongs to the LpxK family.

It catalyses the reaction a lipid A disaccharide + ATP = a lipid IVA + ADP + H(+). It participates in glycolipid biosynthesis; lipid IV(A) biosynthesis; lipid IV(A) from (3R)-3-hydroxytetradecanoyl-[acyl-carrier-protein] and UDP-N-acetyl-alpha-D-glucosamine: step 6/6. Its function is as follows. Transfers the gamma-phosphate of ATP to the 4'-position of a tetraacyldisaccharide 1-phosphate intermediate (termed DS-1-P) to form tetraacyldisaccharide 1,4'-bis-phosphate (lipid IVA). The polypeptide is Tetraacyldisaccharide 4'-kinase (Escherichia coli (strain 55989 / EAEC)).